A 118-amino-acid chain; its full sequence is Thioredoxin H5 (118 aa).

Residue Ala2 is modified to N-acetylalanine. One can recognise a Thioredoxin domain in the interval 2 to 113 (AGEGEVIACH…INEKLMKHGG (112 aa)). Active-site nucleophile residues include Cys39 and Cys42. A disulfide bond links Cys39 and Cys42.

Belongs to the thioredoxin family. Plant H-type subfamily. In terms of assembly, interacts with MDH1.

Its subcellular location is the cytoplasm. Its function is as follows. Thiol-disulfide oxidoreductase involved in response to pathogens and oxidative stresses. Required for the response to victorin, a phytotoxin which induces programmed cell death in sensitive plants. Possesses insulin disulfide bonds reducing activity. In Arabidopsis thaliana (Mouse-ear cress), this protein is Thioredoxin H5 (TRX5).